The chain runs to 407 residues: uncharacterized protein (407 aa).

Disordered regions lie at residues 1–62 and 350–379; these read MTGR…NGDP and SVTPAAAAPPGVPKPEHGEELEADPWKPSS. The segment covering 17 to 30 has biased composition (basic and acidic residues); the sequence is PVEKMPRFQREHGA.

This is an uncharacterized protein from Ictaluridae (bullhead catfishes).